A 490-amino-acid polypeptide reads, in one-letter code: Protein nucleotidyltransferase YdiU (490 aa).

8 residues coordinate ATP: glycine 94, glycine 96, arginine 97, lysine 117, aspartate 129, glycine 130, arginine 180, and arginine 187. Aspartate 256 functions as the Proton acceptor in the catalytic mechanism. Residues asparagine 257 and aspartate 266 each coordinate Mg(2+). Position 266 (aspartate 266) interacts with ATP.

This sequence belongs to the SELO family. Mg(2+) is required as a cofactor. Requires Mn(2+) as cofactor.

The enzyme catalyses L-seryl-[protein] + ATP = 3-O-(5'-adenylyl)-L-seryl-[protein] + diphosphate. It carries out the reaction L-threonyl-[protein] + ATP = 3-O-(5'-adenylyl)-L-threonyl-[protein] + diphosphate. The catalysed reaction is L-tyrosyl-[protein] + ATP = O-(5'-adenylyl)-L-tyrosyl-[protein] + diphosphate. It catalyses the reaction L-histidyl-[protein] + UTP = N(tele)-(5'-uridylyl)-L-histidyl-[protein] + diphosphate. The enzyme catalyses L-seryl-[protein] + UTP = O-(5'-uridylyl)-L-seryl-[protein] + diphosphate. It carries out the reaction L-tyrosyl-[protein] + UTP = O-(5'-uridylyl)-L-tyrosyl-[protein] + diphosphate. In terms of biological role, nucleotidyltransferase involved in the post-translational modification of proteins. It can catalyze the addition of adenosine monophosphate (AMP) or uridine monophosphate (UMP) to a protein, resulting in modifications known as AMPylation and UMPylation. This is Protein nucleotidyltransferase YdiU from Clostridium perfringens (strain ATCC 13124 / DSM 756 / JCM 1290 / NCIMB 6125 / NCTC 8237 / Type A).